The chain runs to 143 residues: Glycine cleavage system H protein 1 (143 aa).

The 82-residue stretch at 26-107 folds into the Lipoyl-binding domain; that stretch reads IYSVGMASIL…PYSSWIAKLK (82 aa). An N6-lipoyllysine modification is found at K67.

It belongs to the GcvH family. The glycine cleavage system is composed of four proteins: P, T, L and H. The cofactor is (R)-lipoate.

Its function is as follows. The glycine cleavage system catalyzes the degradation of glycine. The H protein shuttles the methylamine group of glycine from the P protein to the T protein. The polypeptide is Glycine cleavage system H protein 1 (Aquifex aeolicus (strain VF5)).